We begin with the raw amino-acid sequence, 285 residues long: Gas vesicle protein C2 (285 aa).

6 repeat units span residues 22 to 52, 53 to 84, 85 to 122, 123 to 155, 156 to 188, and 189 to 220. A 6 X approximate tandem repeats region spans residues 22-220; sequence EAMDAYAEEF…ADDTTAQTDV (199 aa).

This sequence belongs to the halobacterial gas vesicle GvpC family.

Its subcellular location is the gas vesicle. Its function is as follows. Confers stability, involved in shaping gas vesicles (GV), hollow, gas filled proteinaceous nanostructures. GVs allow positioning of halobacteria at an optimal depth for growth in the poorly aerated, shallow brine pools of their habitat. Functionally, expression of 2 c-vac DNA fragments containing 2 divergently transcribed regions (gvpE-gvpF-gvpG-gvpH-gvpI-gvpJ-gvpK-gvpL-gvpM and gvpA-gvpC-gvpN-gvpO) allows H.volcanii to produce gas vesicles. The chain is Gas vesicle protein C2 from Halobacterium salinarum (strain ATCC 700922 / JCM 11081 / NRC-1) (Halobacterium halobium).